Here is a 223-residue protein sequence, read N- to C-terminus: Uridylate kinase (223 aa).

ATP is bound at residue 9–10 (GS). Gly43 serves as a coordination point for UMP. The ATP site is built by Gly44 and Arg48. Residues Asp65 and 112–118 (THPGHTT) contribute to the UMP site. Thr137, Asn138, Tyr143, and Asp146 together coordinate ATP.

It belongs to the UMP kinase family. In terms of assembly, homohexamer.

The protein resides in the cytoplasm. It carries out the reaction UMP + ATP = UDP + ADP. Its pathway is pyrimidine metabolism; CTP biosynthesis via de novo pathway; UDP from UMP (UMPK route): step 1/1. Inhibited by UTP. Catalyzes the reversible phosphorylation of UMP to UDP. This Methanopyrus kandleri (strain AV19 / DSM 6324 / JCM 9639 / NBRC 100938) protein is Uridylate kinase.